A 411-amino-acid polypeptide reads, in one-letter code: MLLTVFCAPRDRSETTFALDVSPELELRDFLALCELESGIPAGEIQIIYAEQPLQDPTRALGNYGLKDGDVLVLRQAERLRAPPQPTVPGLPRIDFSSIAVPGTSSGQNRNRPQQAQRPSTTQPPPPQATTSPGSGVSPQGLDNPALLRDMLLANPHELSLLKERNPPLAEALLSGDLERFTKVLMEQQQDRARRDQERIKLLTADPFDLDAQAKIEEEIRQHNIEENMTIAMEEAPESFGQVVMLYINCKVNGHPVKAFVDSGAQMTIMSQACAERCNIMRLVDRRWAGIAKGVGTQKIIGRVHLAQVQIEGDFLPCSFSILEDQPMDMLLGLDMLKRHQCSIDLKKNVLLIGTTGTETRFLPEAELPECARLAYGPEGREEPRPDEIADRELAEAIQRSVQDSGKMHDM.

The 81-residue stretch at 1–81 (MLLTVFCAPR…LVLRQAERLR (81 aa)) folds into the Ubiquitin-like domain. The disordered stretch occupies residues 82-144 (APPQPTVPGL…SGVSPQGLDN (63 aa)). The segment covering 108–121 (QNRNRPQQAQRPST) has biased composition (low complexity). Asp262 is an active-site residue. Residues 387–406 (DEIADRELAEAIQRSVQDSG) carry the Ubiquitin-binding motif.

Belongs to the DDI1 family. As to quaternary structure, homodimer.

Its subcellular location is the cytoplasm. It localises to the cytosol. The protein resides in the chromosome. Its function is as follows. Aspartic protease that mediates the cleavage of NFE2L1/NRF1 at 'Leu-104', thereby promoting release of NFE2L1/NRF1 from the endoplasmic reticulum membrane. Ubiquitination of NFE2L1/NRF1 is a prerequisite for cleavage, suggesting that DDI2 specifically recognizes and binds ubiquitinated NFE2L1/NRF1. Seems to act as a proteasomal shuttle which links the proteasome and replication fork proteins like RTF2. Required for cellular survival following replication stress. The protein is Protein DDI1 homolog 2 (ddi2) of Danio rerio (Zebrafish).